Here is a 1483-residue protein sequence, read N- to C-terminus: Cystic fibrosis transmembrane conductance regulator (1483 aa).

Residues 1 to 77 (MQRSPLEKAS…KLINALRRCF (77 aa)) lie on the Cytoplasmic side of the membrane. A helical membrane pass occupies residues 78 to 98 (FWKFMFYGILLYLGEVTKAVQ). The region spanning 81–365 (FMFYGILLYL…WAVQTWYDSL (285 aa)) is the ABC transmembrane type-1 1 domain. Topologically, residues 99-122 (PLLLGRIIASYDPDNKVERSIAIY) are extracellular. The helical transmembrane segment at 123-146 (LGIGLCLLFVVRTLLLHPAIFGLH) threads the bilayer. At 147–195 (HIGMQMRIAMFSLIYKKTLKLSSRVLDKISIGQLISLLSNNLNKFDEGL) the chain is on the cytoplasmic side. The chain crosses the membrane as a helical span at residues 196–216 (ALAHFVWIVPLQVTLLMGLLW). Residues 217 to 222 (ELLQAS) lie on the Extracellular side of the membrane. A helical membrane pass occupies residues 223–243 (AFCGLAFLIIVAFYQAGLGRM). At 244 to 298 (MMKYRDKRGGKINERLVITSEMIENIQSVKAYCWEEAMEKMIENLRQTELKLTRK) the chain is on the cytoplasmic side. The chain crosses the membrane as a helical span at residues 299 to 319 (AAYVRYCNSSAFFFSGFFVVF). Residues 320–339 (LSVLPYALMKGIILRKIFTT) lie on the Extracellular side of the membrane. A helical transmembrane segment spans residues 340–358 (ISFCIVLRMAVTRQFPWAV). The Cytoplasmic segment spans residues 359–859 (QTWYDSLGAI…YLRYITIHKS (501 aa)). Residues Trp401, Ser434, 458-465 (GSTGAGKT), and Gln493 contribute to the ATP site. In terms of domain architecture, ABC transporter 1 spans 423–646 (NGDNSLFFSN…RPDFSSKLMG (224 aa)). Cys524 is lipidated: S-palmitoyl cysteine. Phosphoserine occurs at positions 549 and 660. The segment at 654 to 832 (SAERRNSILT…EEINEEDLKE (179 aa)) is disordered R region. At Ser670 the chain carries Phosphoserine; by PKA. Residue Ser686 is modified to Phosphoserine. Lys688 is covalently cross-linked (Glycyl lysine isopeptide (Lys-Gly) (interchain with G-Cter in ubiquitin)). 2 positions are modified to phosphoserine: Ser700 and Ser712. At Thr717 the chain carries Phosphothreonine. 5 positions are modified to phosphoserine: Ser737, Ser768, Ser791, Ser796, and Ser814. A helical transmembrane segment spans residues 860–880 (LIFVLIWCLIIFLAEVAVSLV). An ABC transmembrane type-1 2 domain is found at 860–1157 (LIFVLIWCLI…AVNSSIDVDS (298 aa)). Residues 881-920 (FLLLFEKSPRQDTGNVTKSSNNSSYGVIITNTSSYYIIYI) are Extracellular-facing. Asn895, Asn901, Asn902, and Asn911 each carry an N-linked (GlcNAc...) asparagine glycan. A discontinuously helical membrane pass occupies residues 921–941 (YVGVADTLLALGLLRGLPLVH). Over 942–992 (TLITASKILHHKMLHSVLQAPMSTLNTLKAGGILNRFSKDIAILDDLLPLT) the chain is Cytoplasmic. A helical transmembrane segment spans residues 993 to 1013 (IFDFIQLILIVIGAVIVVSVL). Residues 1014–1015 (EP) lie on the Extracellular side of the membrane. The chain crosses the membrane as a helical span at residues 1016-1036 (YIFLATVPVIIAFVMLRAYFL). The Cytoplasmic portion of the chain corresponds to 1037–1097 (HTSQQLKQLE…TANWFLYLST (61 aa)). Residues 1098-1118 (LRWFQMRIEMIFVIFFIAVTF) traverse the membrane as a helical segment. Topologically, residues 1119–1132 (ISILTTGDGEGRVG) are extracellular. Residues 1133–1153 (IILTLAMNIMNTLQWAVNSSI) traverse the membrane as a helical segment. Topologically, residues 1154-1483 (DVDSLMRSVS…TEEEVQETRL (330 aa)) are cytoplasmic. The ABC transporter 2 domain occupies 1213-1446 (MTVKDLTAKY…KSLFRQAISN (234 aa)). ATP-binding positions include Tyr1222 and 1247–1254 (GRTGSGKS). The interval 1389-1483 (RTIKQAFADC…TEEEVQETRL (95 aa)) is interaction with GORASP2. Residue Cys1398 is the site of S-palmitoyl cysteine attachment. Phosphoserine occurs at positions 1447 and 1459. Basic residues predominate over residues 1455 to 1465 (HRNSSKHKSRS). The disordered stretch occupies residues 1455–1483 (HRNSSKHKSRSKIAALKEETEEEVQETRL). Over residues 1473 to 1483 (ETEEEVQETRL) the composition is skewed to acidic residues. The PDZ-binding signature appears at 1481–1483 (TRL).

Belongs to the ABC transporter superfamily. ABCC family. CFTR transporter (TC 3.A.1.202) subfamily. Monomer; does not require oligomerization for channel activity. May form oligomers in the membrane. Interacts with SLC26A3, SLC26A6 and NHERF1. Interacts with SHANK2. Interacts with MYO6. Interacts (via C-terminus) with GOPC (via PDZ domain); this promotes CFTR internalization and thereby decreases channel activity. Interacts with SLC4A7 through NHERF1. Found in a complex with MYO5B and RAB11A. Interacts with ANO1. Interacts with SLC26A8. Interacts with AHCYL1; the interaction increases CFTR activity. Interacts with CSE1L. The core-glycosylated form interacts with GORASP2 (via PDZ GRASP-type 1 domain) in respone to ER stress. Interacts with MARCHF2; the interaction leads to CFTR ubiqtuitination and degradation. Interacts with ADGRG2. N-glycosylated. In terms of processing, phosphorylated; cAMP treatment promotes phosphorylation and activates the channel. Dephosphorylation decreases the ATPase activity (in vitro). Phosphorylation at PKA sites activates the channel. Phosphorylation at PKC sites enhances the response to phosphorylation by PKA. Phosphorylated by AMPK; this inhibits channel activity. Post-translationally, ubiquitinated, leading to its degradation in the lysosome. Deubiquitination by USP10 in early endosomes enhances its endocytic recycling to the cell membrane. Ubiquitinated by RNF185 during ER stress. Ubiquitinated by MARCHF2.

The protein resides in the apical cell membrane. It localises to the early endosome membrane. It is found in the cell membrane. The protein localises to the recycling endosome membrane. Its subcellular location is the endoplasmic reticulum membrane. The protein resides in the nucleus. The enzyme catalyses ATP + H2O + closed Cl(-) channel = ADP + phosphate + open Cl(-) channel.. It carries out the reaction chloride(in) = chloride(out). The catalysed reaction is hydrogencarbonate(in) = hydrogencarbonate(out). It catalyses the reaction ATP + H2O = ADP + phosphate + H(+). Epithelial ion channel that plays an important role in the regulation of epithelial ion and water transport and fluid homeostasis. Mediates the transport of chloride ions across the cell membrane. The ion channel is also permeable to HCO(3)(-); selectivity depends on the extracellular chloride concentration. Exerts its function also by modulating the activity of other ion channels and transporters. Contributes to the regulation of the pH and the ion content of the epithelial fluid layer. Modulates the activity of the epithelial sodium channel (ENaC) complex, in part by regulating the cell surface expression of the ENaC complex. May regulate bicarbonate secretion and salvage in epithelial cells by regulating the transporter SLC4A7. Can inhibit the chloride channel activity of ANO1. Plays a role in the chloride and bicarbonate homeostasis during sperm epididymal maturation and capacitation. The polypeptide is Cystic fibrosis transmembrane conductance regulator (Atelerix albiventris (Middle-African hedgehog)).